The sequence spans 312 residues: Pantothenate kinase (312 aa).

Residue 97–104 participates in ATP binding; that stretch reads GSVAVGKS.

This sequence belongs to the prokaryotic pantothenate kinase family.

The protein resides in the cytoplasm. It catalyses the reaction (R)-pantothenate + ATP = (R)-4'-phosphopantothenate + ADP + H(+). It functions in the pathway cofactor biosynthesis; coenzyme A biosynthesis; CoA from (R)-pantothenate: step 1/5. The polypeptide is Pantothenate kinase (Mycobacterium sp. (strain JLS)).